Reading from the N-terminus, the 690-residue chain is Calpain-9 (690 aa).

The segment at Met1 to His23 is disordered. The 296-residue stretch at Leu42–Thr337 folds into the Calpain catalytic domain. The Ca(2+) site is built by Leu81, Gly83, and Asp88. Residue Cys97 is part of the active site. Position 167 (Glu167) interacts with Ca(2+). Catalysis depends on residues His254 and Asn278. 5 residues coordinate Ca(2+): Glu284, Asp291, Leu312, Asp314, and Glu316. The segment at Pro338 to Gln521 is domain III. EF-hand domains are found at residues Glu518–Lys552, Leu561–Phe589, and Asp591–Gln626. The domain IV stretch occupies residues Gln522 to Ile690. Ca(2+)-binding residues include Asp574, Ser576, Asn578, Lys580, Glu585, Asp604, Asp606, Ser608, Thr610, and Glu615.

This sequence belongs to the peptidase C2 family. In terms of tissue distribution, predominantly expressed in stomach and small intestine, although low levels of expression in other organs.

The protein resides in the cytoplasm. Functionally, calcium-regulated non-lysosomal thiol-protease. The polypeptide is Calpain-9 (Capn9) (Mus musculus (Mouse)).